We begin with the raw amino-acid sequence, 159 residues long: SsrA-binding protein (159 aa).

Positions 140–150 are enriched in basic and acidic residues; it reads RATEKERDWNR. The segment at 140 to 159 is disordered; the sequence is RATEKERDWNRQKQRVLRQR.

This sequence belongs to the SmpB family.

The protein resides in the cytoplasm. Required for rescue of stalled ribosomes mediated by trans-translation. Binds to transfer-messenger RNA (tmRNA), required for stable association of tmRNA with ribosomes. tmRNA and SmpB together mimic tRNA shape, replacing the anticodon stem-loop with SmpB. tmRNA is encoded by the ssrA gene; the 2 termini fold to resemble tRNA(Ala) and it encodes a 'tag peptide', a short internal open reading frame. During trans-translation Ala-aminoacylated tmRNA acts like a tRNA, entering the A-site of stalled ribosomes, displacing the stalled mRNA. The ribosome then switches to translate the ORF on the tmRNA; the nascent peptide is terminated with the 'tag peptide' encoded by the tmRNA and targeted for degradation. The ribosome is freed to recommence translation, which seems to be the essential function of trans-translation. This chain is SsrA-binding protein, found in Alcanivorax borkumensis (strain ATCC 700651 / DSM 11573 / NCIMB 13689 / SK2).